Consider the following 130-residue polypeptide: Small ribosomal subunit protein uS11c (130 aa).

The protein belongs to the universal ribosomal protein uS11 family. In terms of assembly, part of the 30S ribosomal subunit.

The protein resides in the plastid. It localises to the chloroplast. This is Small ribosomal subunit protein uS11c from Trieres chinensis (Marine centric diatom).